We begin with the raw amino-acid sequence, 310 residues long: tRNA dimethylallyltransferase (310 aa).

13 to 20 (GPTASGKT) provides a ligand contact to ATP. Residue 15–20 (TASGKT) participates in substrate binding. 4 interaction with substrate tRNA regions span residues 38 to 41 (DSAL), 162 to 166 (QRLSR), 243 to 248 (RCVGYR), and 276 to 283 (KRQITWLR).

Belongs to the IPP transferase family. In terms of assembly, monomer. Requires Mg(2+) as cofactor.

The enzyme catalyses adenosine(37) in tRNA + dimethylallyl diphosphate = N(6)-dimethylallyladenosine(37) in tRNA + diphosphate. Functionally, catalyzes the transfer of a dimethylallyl group onto the adenine at position 37 in tRNAs that read codons beginning with uridine, leading to the formation of N6-(dimethylallyl)adenosine (i(6)A). The sequence is that of tRNA dimethylallyltransferase from Aliivibrio fischeri (strain ATCC 700601 / ES114) (Vibrio fischeri).